Reading from the N-terminus, the 89-residue chain is Small ribosomal subunit protein uS15 (89 aa).

This sequence belongs to the universal ribosomal protein uS15 family. In terms of assembly, part of the 30S ribosomal subunit. Forms a bridge to the 50S subunit in the 70S ribosome, contacting the 23S rRNA.

Its function is as follows. One of the primary rRNA binding proteins, it binds directly to 16S rRNA where it helps nucleate assembly of the platform of the 30S subunit by binding and bridging several RNA helices of the 16S rRNA. Forms an intersubunit bridge (bridge B4) with the 23S rRNA of the 50S subunit in the ribosome. This chain is Small ribosomal subunit protein uS15, found in Nitrosospira multiformis (strain ATCC 25196 / NCIMB 11849 / C 71).